Consider the following 465-residue polypeptide: tRNA-2-methylthio-N(6)-dimethylallyladenosine synthase (465 aa).

Residues 18–136 (RKLYIETYGC…LPNLVGAAEQ (119 aa)) form the MTTase N-terminal domain. [4Fe-4S] cluster-binding residues include Cys27, Cys63, Cys100, Cys174, Cys178, and Cys181. In terms of domain architecture, Radical SAM core spans 160–392 (GGVHINGFVS…IALQNRLSEE (233 aa)). The 64-residue stretch at 395 to 458 (KRDISKTFEV…SATLFGEVVE (64 aa)) folds into the TRAM domain.

Belongs to the methylthiotransferase family. MiaB subfamily. In terms of assembly, monomer. [4Fe-4S] cluster serves as cofactor.

The protein resides in the cytoplasm. The enzyme catalyses N(6)-dimethylallyladenosine(37) in tRNA + (sulfur carrier)-SH + AH2 + 2 S-adenosyl-L-methionine = 2-methylsulfanyl-N(6)-dimethylallyladenosine(37) in tRNA + (sulfur carrier)-H + 5'-deoxyadenosine + L-methionine + A + S-adenosyl-L-homocysteine + 2 H(+). Catalyzes the methylthiolation of N6-(dimethylallyl)adenosine (i(6)A), leading to the formation of 2-methylthio-N6-(dimethylallyl)adenosine (ms(2)i(6)A) at position 37 in tRNAs that read codons beginning with uridine. The polypeptide is tRNA-2-methylthio-N(6)-dimethylallyladenosine synthase (Porphyromonas gingivalis (strain ATCC 33277 / DSM 20709 / CIP 103683 / JCM 12257 / NCTC 11834 / 2561)).